A 422-amino-acid polypeptide reads, in one-letter code: 26S proteasome non-ATPase regulatory subunit 11 (422 aa).

In terms of domain architecture, PCI spans 224 to 392; it reads DWKTAYSYFY…GVLIIFDEPP (169 aa).

This sequence belongs to the proteasome subunit S9 family. As to quaternary structure, component of the 19S proteasome regulatory particle complex. The 26S proteasome consists of a 20S core particle (CP) and two 19S regulatory subunits (RP). The regulatory particle is made of a lid composed of 9 subunits including PSMD11, a base containing 6 ATPases and few additional components.

It localises to the nucleus. It is found in the cytoplasm. Its subcellular location is the cytosol. Its function is as follows. Component of the 26S proteasome, a multiprotein complex involved in the ATP-dependent degradation of ubiquitinated proteins. This complex plays a key role in the maintenance of protein homeostasis by removing misfolded or damaged proteins, which could impair cellular functions, and by removing proteins whose functions are no longer required. Therefore, the proteasome participates in numerous cellular processes, including cell cycle progression, apoptosis, or DNA damage repair. In the complex, PSMD11 is required for proteasome assembly. Plays a key role in increased proteasome activity in embryonic stem cells (ESCs): its high expression in ESCs promotes enhanced assembly of the 26S proteasome, followed by higher proteasome activity. The protein is 26S proteasome non-ATPase regulatory subunit 11 (psmd11) of Xenopus tropicalis (Western clawed frog).